The primary structure comprises 132 residues: Small ribosomal subunit protein uS8 (132 aa).

It belongs to the universal ribosomal protein uS8 family. As to quaternary structure, part of the 30S ribosomal subunit. Contacts proteins S5 and S12.

Its function is as follows. One of the primary rRNA binding proteins, it binds directly to 16S rRNA central domain where it helps coordinate assembly of the platform of the 30S subunit. This Rhodospirillum centenum (strain ATCC 51521 / SW) protein is Small ribosomal subunit protein uS8.